A 95-amino-acid chain; its full sequence is Small ribosomal subunit protein uS17 (95 aa).

Belongs to the universal ribosomal protein uS17 family. Part of the 30S ribosomal subunit.

Its function is as follows. One of the primary rRNA binding proteins, it binds specifically to the 5'-end of 16S ribosomal RNA. The sequence is that of Small ribosomal subunit protein uS17 from Psychrobacter sp. (strain PRwf-1).